A 73-amino-acid polypeptide reads, in one-letter code: uncharacterized protein (73 aa).

The chain crosses the membrane as a helical span at residues 37-57; it reads AIIITVAVVAFGALTLGAIGA.

It localises to the membrane. This is an uncharacterized protein from Natronomonas pharaonis (strain ATCC 35678 / DSM 2160 / CIP 103997 / JCM 8858 / NBRC 14720 / NCIMB 2260 / Gabara) (Halobacterium pharaonis).